The sequence spans 256 residues: Thiazole synthase (256 aa).

Lys-95 serves as the catalytic Schiff-base intermediate with DXP. 1-deoxy-D-xylulose 5-phosphate is bound by residues Gly-156, 182 to 183 (AG), and 204 to 205 (NT).

Belongs to the ThiG family. Homotetramer. Forms heterodimers with either ThiH or ThiS.

It is found in the cytoplasm. The catalysed reaction is [ThiS sulfur-carrier protein]-C-terminal-Gly-aminoethanethioate + 2-iminoacetate + 1-deoxy-D-xylulose 5-phosphate = [ThiS sulfur-carrier protein]-C-terminal Gly-Gly + 2-[(2R,5Z)-2-carboxy-4-methylthiazol-5(2H)-ylidene]ethyl phosphate + 2 H2O + H(+). The protein operates within cofactor biosynthesis; thiamine diphosphate biosynthesis. Functionally, catalyzes the rearrangement of 1-deoxy-D-xylulose 5-phosphate (DXP) to produce the thiazole phosphate moiety of thiamine. Sulfur is provided by the thiocarboxylate moiety of the carrier protein ThiS. In vitro, sulfur can be provided by H(2)S. The polypeptide is Thiazole synthase (Escherichia coli O45:K1 (strain S88 / ExPEC)).